The following is a 245-amino-acid chain: Tetraspanin-16 (245 aa).

Topologically, residues 1 to 13 (MAEIHTPYSSLKK) are cytoplasmic. A helical transmembrane segment spans residues 14 to 34 (LLSLLNGFVAVSGIILVGLGI). Topologically, residues 35-37 (GGK) are extracellular. The chain crosses the membrane as a helical span at residues 38 to 58 (CGGASLTNVLGLSSAYLLHVG). A topological domain (cytoplasmic) is located at residue Asn59. The chain crosses the membrane as a helical span at residues 60 to 80 (LCLVMGCITVLLGCAGWYGAT). Topologically, residues 81-94 (KESRGTLLFCILSM) are extracellular. Residues 95 to 115 (VIVLIMEVTAATVVLLFFPIV) traverse the membrane as a helical segment. The Cytoplasmic segment spans residues 116–245 (GDVALEHTFV…VAQAGLELLA (130 aa)).

Belongs to the tetraspanin (TM4SF) family. As to expression, broadly expressed in most human tissues and cell lines including neural and bone marrow derived tissues.

Its subcellular location is the membrane. The sequence is that of Tetraspanin-16 (TSPAN16) from Homo sapiens (Human).